The chain runs to 561 residues: Dihydroxy-acid dehydratase 3 (561 aa).

Position 50 (cysteine 50) interacts with [2Fe-2S] cluster. Aspartate 82 serves as a coordination point for Mg(2+). Cysteine 123 contributes to the [2Fe-2S] cluster binding site. 2 residues coordinate Mg(2+): aspartate 124 and lysine 125. Lysine 125 bears the N6-carboxylysine mark. Cysteine 195 contacts [2Fe-2S] cluster. Glutamate 447 lines the Mg(2+) pocket. Residue serine 473 is the Proton acceptor of the active site.

This sequence belongs to the IlvD/Edd family. As to quaternary structure, homodimer. It depends on [2Fe-2S] cluster as a cofactor. Mg(2+) is required as a cofactor.

The enzyme catalyses (2R)-2,3-dihydroxy-3-methylbutanoate = 3-methyl-2-oxobutanoate + H2O. It catalyses the reaction (2R,3R)-2,3-dihydroxy-3-methylpentanoate = (S)-3-methyl-2-oxopentanoate + H2O. It functions in the pathway amino-acid biosynthesis; L-isoleucine biosynthesis; L-isoleucine from 2-oxobutanoate: step 3/4. The protein operates within amino-acid biosynthesis; L-valine biosynthesis; L-valine from pyruvate: step 3/4. Functionally, functions in the biosynthesis of branched-chain amino acids. Catalyzes the dehydration of (2R,3R)-2,3-dihydroxy-3-methylpentanoate (2,3-dihydroxy-3-methylvalerate) into 2-oxo-3-methylpentanoate (2-oxo-3-methylvalerate) and of (2R)-2,3-dihydroxy-3-methylbutanoate (2,3-dihydroxyisovalerate) into 2-oxo-3-methylbutanoate (2-oxoisovalerate), the penultimate precursor to L-isoleucine and L-valine, respectively. This Bordetella bronchiseptica (strain ATCC BAA-588 / NCTC 13252 / RB50) (Alcaligenes bronchisepticus) protein is Dihydroxy-acid dehydratase 3.